The sequence spans 407 residues: MKNNRITKIINQYEYKIFYKRIAFTILILLIYILGSKITIVDENAMRQHDSAFYKLAVSNMGGDIHQLNVFSLGLGPWLTAMIIISLITYKNMEKAMHQTRAEKHYKEKFLTLGLSIIQGYFVINQFVRHTDAKRFTELLLLLILVTGAMLMMWLADQNMRYGIAGPMPIVLLSVIKSMFTQSLPIVSIEILMLVVMVILIIVALFILLLTELIEYRIHYRDIIEMPTPGQPTYLAWKINPGGSISIMISLSVFLLLTSTINLIFNMVTGKTPHLQWLSFGHYMGVTIYLILQTVLGYLLSRLIVNTKQNTKDFLKNGNYFIGIRPGADTGNYLNHLAKRLCWFGTTIVTAIIGVPLYISLLVPDLSEYIYFAVQLMIMVYLAMNITETMRTYLYFDKYGAFLNQYW.

Helical transmembrane passes span 22 to 42 (IAFT…TIVD), 68 to 88 (LNVF…ISLI), 108 to 128 (EKFL…NQFV), 136 to 156 (FTEL…MWLA), 169 to 189 (PIVL…IVSI), 191 to 211 (ILML…LLLT), 245 to 265 (ISIM…NLIF), 280 to 300 (FGHY…GYLL), 343 to 363 (WFGT…SLLV), and 366 to 386 (LSEY…AMNI).

Belongs to the SecY/SEC61-alpha family. SecY2 subfamily. As to quaternary structure, component of the accessory SecA2/SecY2 protein translocase complex required to export cell wall proteins. May form heterotrimers with SecE and SecG subunits.

It is found in the cell membrane. Its function is as follows. Part of the accessory SecA2/SecY2 system specifically required for export of possible cell wall proteins. The central subunit of a protein translocation channel. This chain is Accessory Sec system protein translocase subunit SecY2, found in Staphylococcus pseudintermedius (strain ED99).